We begin with the raw amino-acid sequence, 361 residues long: [LysW]-lysine hydrolase (361 aa).

Histidine 67 is a binding site for Zn(2+). Residue aspartate 69 is part of the active site. Zn(2+) is bound at residue aspartate 91. The active-site Proton acceptor is the glutamate 124. Zn(2+) contacts are provided by glutamate 125, glutamate 148, and histidine 326.

Belongs to the peptidase M20A family. LysK subfamily. As to quaternary structure, homotetramer and homooctamer. Zn(2+) is required as a cofactor. It depends on Co(2+) as a cofactor.

It is found in the cytoplasm. The enzyme catalyses [amino-group carrier protein]-C-terminal-gamma-(L-lysyl)-L-glutamate + H2O = [amino-group carrier protein]-C-terminal-L-glutamate + L-lysine. Its pathway is amino-acid biosynthesis; L-lysine biosynthesis via AAA pathway; L-lysine from L-alpha-aminoadipate (Thermus route): step 5/5. Its function is as follows. Catalyzes the release of L-lysine from [LysW]-gamma-L-lysine. In vitro, can deacetylate both N(2)-acetyl-L-lysine and N(2)-acetyl-L-ornithine. This is [LysW]-lysine hydrolase from Thermus thermophilus (strain ATCC BAA-163 / DSM 7039 / HB27).